Reading from the N-terminus, the 116-residue chain is Evasin P1180 (116 aa).

The first 25 residues, 1–25 (MARNWSFRVIFVSAMWCALLKFATL), serve as a signal peptide directing secretion. 4 disulfides stabilise this stretch: Cys38/Cys58, Cys54/Cys95, Cys71/Cys100, and Cys90/Cys109. N-linked (GlcNAc...) asparagine glycosylation is found at Asn45, Asn73, and Asn104.

It is found in the secreted. Its function is as follows. Salivary chemokine-binding protein which binds to host chemokines CCL2, CCL3, CCL4, CCL8 and CCL18. The polypeptide is Evasin P1180 (Amblyomma triste (Neotropical tick)).